A 280-amino-acid chain; its full sequence is ATP synthase gamma chain (280 aa).

The protein belongs to the ATPase gamma chain family. As to quaternary structure, F-type ATPases have 2 components, CF(1) - the catalytic core - and CF(0) - the membrane proton channel. CF(1) has five subunits: alpha(3), beta(3), gamma(1), delta(1), epsilon(1). CF(0) has three main subunits: a, b and c.

Its subcellular location is the cell membrane. Its function is as follows. Produces ATP from ADP in the presence of a proton gradient across the membrane. The gamma chain is believed to be important in regulating ATPase activity and the flow of protons through the CF(0) complex. The polypeptide is ATP synthase gamma chain (Mycoplasma mycoides subsp. mycoides SC (strain CCUG 32753 / NCTC 10114 / PG1)).